A 132-amino-acid chain; its full sequence is Transmembrane protein 170B (132 aa).

Over 1–37 (MRAEGADHSMINLSVQQVLSLWAHGTVLRNLTEMWYW) the chain is Extracellular. Asn-12 carries N-linked (GlcNAc...) asparagine glycosylation. The helical transmembrane segment at 38-58 (IFLWALFSSLFVHGAAGVLMF) threads the bilayer. At 59–68 (VMLQRHRQGR) the chain is on the cytoplasmic side. A helical transmembrane segment spans residues 69-89 (VLSIIAVSIGFLASVTGAMIT). Residues 90–104 (SAAVAGIYRVAGKNM) are Extracellular-facing. The helical transmembrane segment at 105–125 (APLEALVWGVGQTVLTLIISF) threads the bilayer. Over 126 to 132 (SRILATL) the chain is Cytoplasmic.

This sequence belongs to the TMEM170 family. As to quaternary structure, interacts with CTNNB1.

Its subcellular location is the cell membrane. The protein is Transmembrane protein 170B (Tmem170b) of Rattus norvegicus (Rat).